The primary structure comprises 133 residues: Fluoride-specific ion channel FluC (133 aa).

Helical transmembrane passes span 4–24 (LLWIALGGSLGALCRYGLSVL), 35–55 (WGTLAANLVGCFLIGGLWVLA), 66–86 (VFIFTGGIGSLTTFSTYSLES), and 107–127 (VLGLVLVAIGAGCALFLLGGP). The Na(+) site is built by G74 and T77.

Belongs to the fluoride channel Fluc/FEX (TC 1.A.43) family.

It is found in the cell inner membrane. The enzyme catalyses fluoride(in) = fluoride(out). Na(+) is not transported, but it plays an essential structural role and its presence is essential for fluoride channel function. Its function is as follows. Fluoride-specific ion channel. Important for reducing fluoride concentration in the cell, thus reducing its toxicity. In Salinibacter ruber (strain DSM 13855 / M31), this protein is Fluoride-specific ion channel FluC.